A 107-amino-acid polypeptide reads, in one-letter code: UPF0145 protein BT_3410 (107 aa).

This sequence belongs to the UPF0145 family.

This is UPF0145 protein BT_3410 from Bacteroides thetaiotaomicron (strain ATCC 29148 / DSM 2079 / JCM 5827 / CCUG 10774 / NCTC 10582 / VPI-5482 / E50).